The primary structure comprises 397 residues: Succinate--CoA ligase [ADP-forming] subunit beta (397 aa).

Residues 9–254 enclose the ATP-grasp domain; it reads KALLKGYGAP…ETEEDAKEIE (246 aa). ATP is bound by residues K46, 53–55, E109, A112, and E117; that span reads GRG. Residues N209 and D223 each contribute to the Mg(2+) site. Substrate contacts are provided by residues N274 and 331-333; that span reads GIM.

Belongs to the succinate/malate CoA ligase beta subunit family. In terms of assembly, heterotetramer of two alpha and two beta subunits. Requires Mg(2+) as cofactor.

It carries out the reaction succinate + ATP + CoA = succinyl-CoA + ADP + phosphate. It catalyses the reaction GTP + succinate + CoA = succinyl-CoA + GDP + phosphate. The protein operates within carbohydrate metabolism; tricarboxylic acid cycle; succinate from succinyl-CoA (ligase route): step 1/1. Functionally, succinyl-CoA synthetase functions in the citric acid cycle (TCA), coupling the hydrolysis of succinyl-CoA to the synthesis of either ATP or GTP and thus represents the only step of substrate-level phosphorylation in the TCA. The beta subunit provides nucleotide specificity of the enzyme and binds the substrate succinate, while the binding sites for coenzyme A and phosphate are found in the alpha subunit. This Rhizobium johnstonii (strain DSM 114642 / LMG 32736 / 3841) (Rhizobium leguminosarum bv. viciae) protein is Succinate--CoA ligase [ADP-forming] subunit beta.